We begin with the raw amino-acid sequence, 440 residues long: Phenylacetate-coenzyme A ligase (440 aa).

It belongs to the phenylacetyl-CoA ligase family. Monomer.

The enzyme catalyses 2-phenylacetate + ATP + CoA = phenylacetyl-CoA + AMP + diphosphate. It functions in the pathway aromatic compound metabolism; phenylacetate degradation. Its activity is regulated as follows. Inhibition of activity is observed in the presence of a 1 mM of the divalent cations zinc, copper, and nickel. Functionally, catalyzes the activation of phenylacetic acid (PA) to phenylacetyl-CoA (PA-CoA). Involved in the phenylalanine metabolism. The polypeptide is Phenylacetate-coenzyme A ligase (paaK) (Aromatoleum evansii (Azoarcus evansii)).